Reading from the N-terminus, the 274-residue chain is Shikimate dehydrogenase (NADP(+)) (274 aa).

Shikimate is bound by residues 14 to 16 (SKS) and T60. The Proton acceptor role is filled by K64. E76 provides a ligand contact to NADP(+). N85 and D101 together coordinate shikimate. Residues 126-130 (GAGGA), 150-155 (NRTARK), and M214 contribute to the NADP(+) site. Position 216 (Y216) interacts with shikimate. An NADP(+)-binding site is contributed by G238.

This sequence belongs to the shikimate dehydrogenase family. In terms of assembly, homodimer.

It catalyses the reaction shikimate + NADP(+) = 3-dehydroshikimate + NADPH + H(+). It participates in metabolic intermediate biosynthesis; chorismate biosynthesis; chorismate from D-erythrose 4-phosphate and phosphoenolpyruvate: step 4/7. Involved in the biosynthesis of the chorismate, which leads to the biosynthesis of aromatic amino acids. Catalyzes the reversible NADPH linked reduction of 3-dehydroshikimate (DHSA) to yield shikimate (SA). The polypeptide is Shikimate dehydrogenase (NADP(+)) (Pseudomonas aeruginosa (strain ATCC 15692 / DSM 22644 / CIP 104116 / JCM 14847 / LMG 12228 / 1C / PRS 101 / PAO1)).